We begin with the raw amino-acid sequence, 560 residues long: MMTSWSDRLQNAADVPANMDKHALKKYRREAYHRVFVNRSLAMEKIKCFGFDMDYTLAVYKSPEYESLGFELTVERLVSIGYPQELLNFAYDSTFPTRGLVFDTLYGNLLKVDAYGNLLVCAHGFNFIRGPETREQYPNKFIQRDDTERFYILNTLFNLPETYLLACLVDFFTNCPRYTSCDTGFKDGDLFMSYRSMFQDVRDAVDWVHYKGSLKEKTVENLEKYVVKDGKLPLLLSRMKEVGKVFLATNSDYKYTDKIMTYLFDFPHGPKPGSSHRPWQSYFDLILVDARKPLFFGEGTVLRQVDTKTGKLKIGTYTGPLQHGIVYSGGSSDTICDLLGAKGKDILYIGDHIFGDILKSKKRQGWRTFLVIPELAQELHVWTDKSSLFEELQSLDIFLAELYKHLDSSSNERPDISSIQRRIKKVTHDMDMCYGMMGSLFRSGSRQTLFASQVMRYADLYAASFINLLYYPFSYLFRAAHVLMPHESTVEHTHVDINEMESPLATRNRTSVDFKDTDYKRHQLTRSISEIKPPNLFPLAPQEITHCHDEDDDEEEEEEE.

Asp52 acts as the Nucleophile in catalysis. IMP contacts are provided by Asp52 and Asp54. Mg(2+) contacts are provided by Asp52 and Asp54. Catalysis depends on Asp54, which acts as the Proton donor. Residues Arg144 and Asn154 each coordinate ATP. IMP is bound by residues Arg202, Asp206, Lys215, Thr249, Asn250, Ser251, and Lys292. Residue Asp351 participates in Mg(2+) binding. Ser418 carries the phosphoserine modification. ATP is bound by residues Gln453 and Arg456. Phosphoserine is present on residues Ser502, Ser511, and Ser527. The interval 541-560 is disordered; sequence PQEITHCHDEDDDEEEEEEE. The tract at residues 548–560 is required for tetramer assembly; sequence HDEDDDEEEEEEE. The span at 550–560 shows a compositional bias: acidic residues; the sequence is EDDDEEEEEEE.

Belongs to the 5'(3')-deoxyribonucleotidase family. As to quaternary structure, homotetramer. Mg(2+) is required as a cofactor.

It is found in the cytoplasm. The protein localises to the cytosol. It catalyses the reaction a ribonucleoside 5'-phosphate + H2O = a ribonucleoside + phosphate. It carries out the reaction a 2'-deoxyribonucleoside + a ribonucleoside 5'-phosphate = a ribonucleoside + a 2'-deoxyribonucleoside 5'-phosphate. The enzyme catalyses IMP + H2O = inosine + phosphate. The catalysed reaction is GMP + H2O = guanosine + phosphate. It catalyses the reaction dIMP + H2O = 2'-deoxyinosine + phosphate. It carries out the reaction dGMP + H2O = 2'-deoxyguanosine + phosphate. The enzyme catalyses XMP + H2O = xanthosine + phosphate. The catalysed reaction is inosine + GMP = guanosine + IMP. It catalyses the reaction dGMP + inosine = 2'-deoxyguanosine + IMP. It carries out the reaction dIMP + inosine = 2'-deoxyinosine + IMP. The enzyme catalyses inosine + UMP = uridine + IMP. The catalysed reaction is inosine + CMP = cytidine + IMP. It catalyses the reaction inosine + AMP = IMP + adenosine. Its activity is regulated as follows. Allosterically activated by various compounds including ATP, 2,3-BPG/2,3-Bisphosphoglyceric acid and Ap4A/P1,P4-bis(5'-adenosyl) tetraphosphate. Binding of an allosteric activator is a prerequisiste to magnesium and substrate binding. Inhibited by inorganic phosphate. Broad specificity cytosolic 5'-nucleotidase that catalyzes the dephosphorylation of 6-hydroxypurine nucleoside 5'-monophosphates. In addition, possesses a phosphotransferase activity by which it can transfer a phosphate from a donor nucleoside monophosphate to an acceptor nucleoside, preferably inosine, deoxyinosine and guanosine. Has the highest activities for IMP and GMP followed by dIMP, dGMP and XMP. Could also catalyze the transfer of phosphates from pyrimidine monophosphates but with lower efficiency. Through these activities regulates the purine nucleoside/nucleotide pools within the cell. This Rattus norvegicus (Rat) protein is Cytosolic purine 5'-nucleotidase.